The chain runs to 84 residues: Protein Tlp homolog (84 aa).

The segment at 1 to 20 is disordered; that stretch reads MGKEERYTKKPKPDDRSDNV.

The protein belongs to the Tlp family.

The chain is Protein Tlp homolog from Caldanaerobacter subterraneus subsp. tengcongensis (strain DSM 15242 / JCM 11007 / NBRC 100824 / MB4) (Thermoanaerobacter tengcongensis).